The primary structure comprises 112 residues: uncharacterized protein (112 aa).

Disordered stretches follow at residues 1–53 and 80–112; these read MSKL…QRLK and MINQ…MLEL. The span at 8-22 shows a compositional bias: polar residues; sequence SALQKLIESQKNPNA. A compositionally biased stretch (basic residues) spans 86 to 96; it reads ETKKRKRKQKK. Acidic residues predominate over residues 101–112; it reads DYGVFEEDMLEL.

The protein resides in the nucleus. It is found in the nucleolus. This is an uncharacterized protein from Schizosaccharomyces pombe (strain 972 / ATCC 24843) (Fission yeast).